A 526-amino-acid chain; its full sequence is Vang-like protein 2 (526 aa).

A disordered region spans residues 1–95 (MDNESQYSGY…NEDLTRASKE (95 aa)). Topologically, residues 1-109 (MDNESQYSGY…SPLECRRFAG (109 aa)) are cytoplasmic. Basic residues predominate over residues 15–33 (SHSRSSRKHRDRRDRHRSK). 2 stretches are compositionally biased toward basic and acidic residues: residues 34–43 (SRDSSSRGDK) and 58–68 (ESTRGDDRDDN). Residues 70–83 (GETTTVVTGTSEHS) are compositionally biased toward low complexity. Positions 84–95 (VSNEDLTRASKE) are enriched in basic and acidic residues. A helical membrane pass occupies residues 110–130 (PIVSGVLGLFALLTPLAFLLL). The Extracellular segment spans residues 131–148 (PQLLWRDSLEPCGTPCEG). Residues 149-169 (LYVSLAFKLLVLLISSWALFL) traverse the membrane as a helical segment. The Cytoplasmic segment spans residues 170-178 (RPSRSTLPR). Residues 179–199 (FFVFRCLLMALVFLFVASYWL) form a helical membrane-spanning segment. The Extracellular segment spans residues 200–215 (FYGVRVLEPRERDYRG). Residues 216-236 (IVGYAVSLVDALLFIQYLALV) traverse the membrane as a helical segment. The Cytoplasmic segment spans residues 237–526 (LLEVRHLRPA…VMRLQSETSV (290 aa)). The short motif at 523–526 (ETSV) is the PDZ-binding element.

The protein belongs to the Vang family. In terms of assembly, interacts with the PDZ domain of dvl2/dsh. In terms of tissue distribution, ubiquitously expressed at the 4-cell stage. In early somitogenesis, becomes more abundant in anterior neural tissue where expression is seen in the neural tube but not in the notochord.

The protein resides in the cell membrane. Plays a role in non-canonical Wnt/planar cell polarity (PCP) signaling to regulate convergent extension cell movements during gastrulation. Acts together with scrib and prickle1 and localizes prickle1 and dvl2/dsh to the plasma membrane. Has an overlapping role with kny during both convergent extension and eye development. In the eye, involved in establishing proper alignment of the anterior neural plate and midline cells expressing shha and shhb/twhh. Has indirect effects on a number of other developmental processes including notochord shape formation, neural progenitor cell morphogenesis, segregation of somites and adaxial cell development. Together with prickle1, required for the posterior (caudal) movement of branchiomotor neurons in the hindbrain independently of, and a few hours after, convergent extension. May be required for cell surface localization of fzd3 and fzd6 in the inner ear. This Danio rerio (Zebrafish) protein is Vang-like protein 2.